Consider the following 84-residue polypeptide: Delta-thalatoxin-Hhe1a (84 aa).

The signal sequence occupies residues 1-19 (MAYQKIVFVALMLVLAVSA). Residues 20–33 (MRLPDQQDQDISVA) constitute a propeptide that is removed on maturation. Cystine bridges form between C38–C78, C40–C68, and C61–C79.

Belongs to the sea anemone sodium channel inhibitory toxin family. Type II subfamily.

The protein resides in the secreted. Its subcellular location is the nematocyst. Its function is as follows. Binds specifically to the voltage-gated sodium channel (Nav) and delays its inactivation. This Heterodactyla hemprichii (Hemprich's sea anemone) protein is Delta-thalatoxin-Hhe1a.